Here is a 601-residue protein sequence, read N- to C-terminus: Elongation factor 4 (601 aa).

Residues 5 to 187 enclose the tr-type G domain; it reads ENIRNFCIVA…AIITTFPPPK (183 aa). Residues 17 to 22 and 134 to 137 each bind GTP; these read DHGKST and NKID.

The protein belongs to the TRAFAC class translation factor GTPase superfamily. Classic translation factor GTPase family. LepA subfamily.

The protein localises to the cell inner membrane. The catalysed reaction is GTP + H2O = GDP + phosphate + H(+). Required for accurate and efficient protein synthesis under certain stress conditions. May act as a fidelity factor of the translation reaction, by catalyzing a one-codon backward translocation of tRNAs on improperly translocated ribosomes. Back-translocation proceeds from a post-translocation (POST) complex to a pre-translocation (PRE) complex, thus giving elongation factor G a second chance to translocate the tRNAs correctly. Binds to ribosomes in a GTP-dependent manner. The polypeptide is Elongation factor 4 (Treponema denticola (strain ATCC 35405 / DSM 14222 / CIP 103919 / JCM 8153 / KCTC 15104)).